Reading from the N-terminus, the 212-residue chain is 3,4-dihydroxy-2-butanone 4-phosphate synthase (212 aa).

D-ribulose 5-phosphate contacts are provided by residues 37–38 (RE), aspartate 42, 150–154 (RRGHT), and glutamate 174. Glutamate 38 serves as a coordination point for Mg(2+). Position 153 (histidine 153) interacts with Mg(2+).

The protein belongs to the DHBP synthase family. As to quaternary structure, homodimer. Mg(2+) serves as cofactor. It depends on Mn(2+) as a cofactor.

It catalyses the reaction D-ribulose 5-phosphate = (2S)-2-hydroxy-3-oxobutyl phosphate + formate + H(+). It functions in the pathway cofactor biosynthesis; riboflavin biosynthesis; 2-hydroxy-3-oxobutyl phosphate from D-ribulose 5-phosphate: step 1/1. Catalyzes the conversion of D-ribulose 5-phosphate to formate and 3,4-dihydroxy-2-butanone 4-phosphate. This Shewanella halifaxensis (strain HAW-EB4) protein is 3,4-dihydroxy-2-butanone 4-phosphate synthase.